A 79-amino-acid polypeptide reads, in one-letter code: Large ribosomal subunit protein uL29 (79 aa).

The protein belongs to the universal ribosomal protein uL29 family.

In Tropheryma whipplei (strain TW08/27) (Whipple's bacillus), this protein is Large ribosomal subunit protein uL29.